Reading from the N-terminus, the 872-residue chain is TATA box-binding protein-associated factor RNA polymerase I subunit B (872 aa).

Residues 6-40 form an RRN7-type zinc finger; the sequence is ETMQLENMHCDVCEGTTFQEREGFYYCVECGTQKD. Residues cysteine 15, cysteine 18, cysteine 32, and cysteine 35 each contribute to the Zn(2+) site. A B-reader region spans residues 41 to 72; the sequence is QIRAVDITAEDNFDDTAAGRYTARTIRQKKDT. Positions 73 to 84 are B-linker; that stretch reads EKEDEDDITSWE. An N-terminal cyclin fold region spans residues 85–312; sequence FYNYVLRGFL…LPGNVAAKGK (228 aa). Residues 187–206 are disordered; sequence DASGYRSHGGASESEGEQSL.

The protein belongs to the RRN7/TAF1B family.

It localises to the nucleus. The protein localises to the nucleolus. In terms of biological role, component of RNA polymerase I core factor complex that acts as a GTF2B/TFIIB-like factor and plays a key role in multiple steps during transcription initiation such as pre-initiation complex (PIC) assembly and postpolymerase recruitment events in polymerase I (Pol I) transcription. Binds rDNA promoters and plays a role in Pol I recruitment. This is TATA box-binding protein-associated factor RNA polymerase I subunit B from Drosophila melanogaster (Fruit fly).